Consider the following 629-residue polypeptide: tRNA uridine 5-carboxymethylaminomethyl modification enzyme MnmG (629 aa).

FAD-binding positions include 13-18 (GGGHAG), Val-125, and Ser-180. Position 273–287 (273–287 (GPRYCPSIEDKVMRF)) interacts with NAD(+). Gln-370 is a binding site for FAD.

Belongs to the MnmG family. As to quaternary structure, homodimer. Heterotetramer of two MnmE and two MnmG subunits. Requires FAD as cofactor.

The protein resides in the cytoplasm. Functionally, NAD-binding protein involved in the addition of a carboxymethylaminomethyl (cmnm) group at the wobble position (U34) of certain tRNAs, forming tRNA-cmnm(5)s(2)U34. This is tRNA uridine 5-carboxymethylaminomethyl modification enzyme MnmG from Salmonella schwarzengrund (strain CVM19633).